The primary structure comprises 86 residues: U15-lycotoxin-Ls1a (86 aa).

A signal peptide spans 1 to 20 (MNSKIFAVLFLLAFLSCVLS). Positions 21 to 66 (DQYCPKSSITACKKMNIRNDCCKDDDCTGGSWCCATPCGNFCKYPT) constitute a WAP domain. Disulfide bonds link Cys24-Cys54, Cys32-Cys58, Cys41-Cys53, Cys42-Cys80, and Cys47-Cys62.

Belongs to the venom protein 11 family. 01 (wap-1) subfamily. Post-translationally, contains 5 disulfide bonds. In terms of tissue distribution, expressed by the venom gland.

The protein localises to the secreted. Has antibacterial activity. The polypeptide is U15-lycotoxin-Ls1a (Lycosa singoriensis (Wolf spider)).